The sequence spans 1059 residues: MGTAQVLPGILQKHCCILPDRNTESQCTLCGEPEEEEGGDLAQPGLSFPGPAEEDIDQQYSWSPTQHFSEERYSPAPRNMKGLTGSRNQPQLCVGHTCGLSPTDECEHPHDHVRHGPDVRQPYLLSPAESCPMDHHRCSPRSSVHSECMMMPVMLGDHVSSSTFPRMHYSSHYDTRDDCATSHASTKVNRIPANLLDQFEKQLPLHRDGFHTLQYHRASAATEQRNESPGRIRHLVHSVQKLFTKSHSLEGSSKSNINGTKSEGRMDDHHQSHLSKHSKRSKSKERKPESKHKSGMSSWWSSDDNLDSDSTYRTPSVAHRHHMDHIPHCYPEALQSPFGDLSLKTSKSNSDVKCSACEGLALTPDTRYMKRSSWSTLTVSQAKEAYRKSSLNLDKPLVHPEIKPSLQPCHYLQVPQDDWGAYPTGGKEEEIPCRRMRSGSYIKAMGDEESGESDSSPKTSPTVALRPEPLLKSIIQRPLGDHQTQSYLQAATEVPVGHSLDPSVNYNSPKFRSRNQSYMRAVSTLSQASCVSQMSEAEVNGQFESVCESVFSEVESQAMDALDLPGCFRTRSHSYLRAIQAGYSQDDECIPVMTPSNMTSTIRSTAAVSYTNYKKTPPPVPPRTTSKPLISVTAQSSTESTQDAYQDSRAQRMSPWPQDSRGGLYNSMDSLDSNKAMNLALESAAAQRHAADTQSSSTRSIDKAVLVSKAEELLKSRCSSIGVQDSEFPDHQPYPRSDVETATDSDTESRGLREYHSVGVQVEDEKRHGRFKRSNSVTAAVQADLELEGFPGHVSMEDKGLQFGSSFQRHSEPSTPTQYGALRTVRTQGLFSYREDYRTQVDTSTLPPPDPWLEPSLDTVETGRMSPCRRDGSWFLKLLHTETKKMEGWCKEMEREAEENDLSEEILGKIRSAVGSAQLLMSQKFQQFYWLCQQNMDPSAMPRPTSQDLAGYWDMLQLSVEDVSMKFDELHQLKLNDWKIMESPERKEERKIPPPIPKKPPKGKFPITREKSLDLPDRQRQEARRRLMAAKRAASFRQNSATERADSIEIYIPEAQTRL.

Disordered stretches follow at residues 31–56 and 244–311; these read GEPE…EEDI and TKSH…SDST. The span at 244–261 shows a compositional bias: polar residues; sequence TKSHSLEGSSKSNINGTK. The span at 262–271 shows a compositional bias: basic and acidic residues; that stretch reads SEGRMDDHHQ. Basic residues predominate over residues 272 to 285; the sequence is SHLSKHSKRSKSKE. Residues Ser302, Ser308, Ser390, and Ser456 each carry the phosphoserine modification. 2 disordered regions span residues 446–466 and 632–669; these read GDEE…VALR and VTAQ…NSMD. Positions 632-645 are enriched in polar residues; it reads VTAQSSTESTQDAY. 4 positions are modified to phosphoserine: Ser667, Ser670, Ser673, and Ser720. Residues 723-756 are disordered; it reads VQDSEFPDHQPYPRSDVETATDSDTESRGLREYH. Thr743 is modified (phosphothreonine). Ser745 bears the Phosphoserine mark. The segment covering 747–756 has biased composition (basic and acidic residues); the sequence is TESRGLREYH. Ser776, Ser811, Ser983, and Ser1012 each carry phosphoserine. Positions 985–1024 are disordered; the sequence is ERKEERKIPPPIPKKPPKGKFPITREKSLDLPDRQRQEAR. Residues 1007–1024 are compositionally biased toward basic and acidic residues; that stretch reads ITREKSLDLPDRQRQEAR.

Belongs to the SAPAP family. In terms of assembly, interacts with DLG4/PSD-95. In terms of tissue distribution, expressed in various brain areas.

It is found in the cell membrane. The protein localises to the postsynaptic density. The protein resides in the synapse. May play a role in the molecular organization of synapses and neuronal cell signaling. Could be an adapter protein linking ion channel to the subsynaptic cytoskeleton. May induce enrichment of PSD-95/SAP90 at the plasma membrane. The sequence is that of Disks large-associated protein 2 from Rattus norvegicus (Rat).